The following is a 492-amino-acid chain: Alpha-2-antiplasmin (492 aa).

An N-terminal signal peptide occupies residues 1 to 22; it reads MALLWGLLALILSCLSSLCSAQ. The propeptide occupies 23-40; sequence FSPVSTMEPLDLQLMDGQ. The segment at 56–76 is disordered; sequence QEPGGQIAPKKAPEDCKLSPT. The cysteines at positions 71 and 144 are disulfide-linked. N-linked (GlcNAc...) asparagine glycans are attached at residues asparagine 127, asparagine 249, asparagine 296, asparagine 310, and asparagine 317. The tract at residues 433–492 is disordered; sequence SVRNPNPGAQPERKEQQDSPDGKDSFQDHKGLPRGDKPFDPDLKLGPPSEEDYAQPSSPK. Residues 443-475 are compositionally biased toward basic and acidic residues; that stretch reads PERKEQQDSPDGKDSFQDHKGLPRGDKPFDPDL. Tyrosine 485 carries the sulfotyrosine modification.

This sequence belongs to the serpin family. In terms of assembly, forms protease inhibiting heterodimer with TMPRSS7. Post-translationally, proteolytically cleaved at Pro-31 by both the prolyl endopeptidase FAP form and antiplasmin-cleaving enzyme FAP soluble form to generate mature alpha-2-antiplasmin. As to expression, expressed by the liver and secreted in plasma.

It localises to the secreted. Functionally, serine protease inhibitor. The major targets of this inhibitor are plasmin and trypsin, but it also inactivates matriptase-3/TMPRSS7 and chymotrypsin. The protein is Alpha-2-antiplasmin (SERPINF2) of Bos taurus (Bovine).